The chain runs to 209 residues: Ribosomal RNA large subunit methyltransferase E (209 aa).

Positions 63, 65, 83, 99, and 124 each coordinate S-adenosyl-L-methionine. Lys-164 functions as the Proton acceptor in the catalytic mechanism.

It belongs to the class I-like SAM-binding methyltransferase superfamily. RNA methyltransferase RlmE family.

The protein localises to the cytoplasm. The enzyme catalyses uridine(2552) in 23S rRNA + S-adenosyl-L-methionine = 2'-O-methyluridine(2552) in 23S rRNA + S-adenosyl-L-homocysteine + H(+). In terms of biological role, specifically methylates the uridine in position 2552 of 23S rRNA at the 2'-O position of the ribose in the fully assembled 50S ribosomal subunit. In Klebsiella pneumoniae (strain 342), this protein is Ribosomal RNA large subunit methyltransferase E.